The sequence spans 311 residues: Olfactory receptor 8G1 (311 aa).

Residues Met-1–Leu-25 are Extracellular-facing. 2 N-linked (GlcNAc...) asparagine glycosylation sites follow: Asn-5 and Asn-6. A helical transmembrane segment spans residues Pro-26 to Thr-46. The Cytoplasmic portion of the chain corresponds to Thr-47–His-54. The helical transmembrane segment at Leu-55–Thr-75 threads the bilayer. Residues Val-76 to Thr-99 are Extracellular-facing. Cys-97 and Cys-189 are joined by a disulfide. The helical transmembrane segment at Gln-100–Tyr-120 threads the bilayer. The Cytoplasmic portion of the chain corresponds to Asp-121–Lys-139. The helical transmembrane segment at Ala-140–Thr-160 threads the bilayer. Over Gly-161–Leu-197 the chain is Extracellular. A helical membrane pass occupies residues Leu-198 to Ser-217. Over Tyr-218 to Ala-237 the chain is Cytoplasmic. A helical membrane pass occupies residues Phe-238–Met-258. Residues Tyr-259–Gly-271 are Extracellular-facing. The chain crosses the membrane as a helical span at residues Lys-272–Leu-292. The Cytoplasmic segment spans residues Arg-293–Leu-311.

Belongs to the G-protein coupled receptor 1 family.

It is found in the cell membrane. Functionally, odorant receptor. This Homo sapiens (Human) protein is Olfactory receptor 8G1 (OR8G1).